Here is a 232-residue protein sequence, read N- to C-terminus: Phosphatidylserine decarboxylase proenzyme (232 aa).

Serine 190 (schiff-base intermediate with substrate; via pyruvic acid) is an active-site residue. The residue at position 190 (serine 190) is a Pyruvic acid (Ser); by autocatalysis.

It belongs to the phosphatidylserine decarboxylase family. PSD-A subfamily. Heterodimer of a large membrane-associated beta subunit and a small pyruvoyl-containing alpha subunit. The cofactor is pyruvate. Is synthesized initially as an inactive proenzyme. Formation of the active enzyme involves a self-maturation process in which the active site pyruvoyl group is generated from an internal serine residue via an autocatalytic post-translational modification. Two non-identical subunits are generated from the proenzyme in this reaction, and the pyruvate is formed at the N-terminus of the alpha chain, which is derived from the carboxyl end of the proenzyme. The post-translation cleavage follows an unusual pathway, termed non-hydrolytic serinolysis, in which the side chain hydroxyl group of the serine supplies its oxygen atom to form the C-terminus of the beta chain, while the remainder of the serine residue undergoes an oxidative deamination to produce ammonia and the pyruvoyl prosthetic group on the alpha chain.

Its subcellular location is the cell membrane. It catalyses the reaction a 1,2-diacyl-sn-glycero-3-phospho-L-serine + H(+) = a 1,2-diacyl-sn-glycero-3-phosphoethanolamine + CO2. Its pathway is phospholipid metabolism; phosphatidylethanolamine biosynthesis; phosphatidylethanolamine from CDP-diacylglycerol: step 2/2. In terms of biological role, catalyzes the formation of phosphatidylethanolamine (PtdEtn) from phosphatidylserine (PtdSer). The sequence is that of Phosphatidylserine decarboxylase proenzyme from Brucella abortus (strain S19).